A 346-amino-acid chain; its full sequence is Deoxyhypusine hydroxylase (346 aa).

5 HEAT-like PBS-type repeats span residues 71 to 100, 104 to 133, 213 to 242, 246 to 275, and 279 to 320; these read VLLR…LNDT, LMVR…LNDE, LKLR…LIKD, AIFR…LQNV, and EMVR…SKDA. Residues histidine 75, histidine 108, and glutamate 109 each contribute to the Fe cation site. 3 residues coordinate Fe cation: histidine 250, histidine 283, and glutamate 284.

This sequence belongs to the deoxyhypusine hydroxylase family. It depends on Fe(2+) as a cofactor.

It catalyses the reaction [eIF5A protein]-deoxyhypusine + AH2 + O2 = [eIF5A protein]-hypusine + A + H2O. It functions in the pathway protein modification; eIF5A hypusination. Its function is as follows. Catalyzes the hydroxylation of the N(6)-(4-aminobutyl)-L-lysine intermediate produced by deoxyhypusine synthase/DHPS on a critical lysine of the eukaryotic translation initiation factor 5A/eIF-5A. This is the second step of the post-translational modification of that lysine into an unusual amino acid residue named hypusine. Hypusination is unique to mature eIF-5A factor and is essential for its function. The protein is Deoxyhypusine hydroxylase of Plasmodium vivax (strain Salvador I).